We begin with the raw amino-acid sequence, 214 residues long: ATP-dependent Clp protease proteolytic subunit 2 (214 aa).

Ser-110 functions as the Nucleophile in the catalytic mechanism. Residue His-135 is part of the active site.

This sequence belongs to the peptidase S14 family. In terms of assembly, fourteen ClpP subunits assemble into 2 heptameric rings which stack back to back to give a disk-like structure with a central cavity, resembling the structure of eukaryotic proteasomes.

The protein resides in the cytoplasm. The catalysed reaction is Hydrolysis of proteins to small peptides in the presence of ATP and magnesium. alpha-casein is the usual test substrate. In the absence of ATP, only oligopeptides shorter than five residues are hydrolyzed (such as succinyl-Leu-Tyr-|-NHMec, and Leu-Tyr-Leu-|-Tyr-Trp, in which cleavage of the -Tyr-|-Leu- and -Tyr-|-Trp bonds also occurs).. Functionally, cleaves peptides in various proteins in a process that requires ATP hydrolysis. Has a chymotrypsin-like activity. Plays a major role in the degradation of misfolded proteins. The protein is ATP-dependent Clp protease proteolytic subunit 2 of Mycobacterium bovis (strain ATCC BAA-935 / AF2122/97).